The following is a 438-amino-acid chain: Serine--tRNA ligase (438 aa).

L-serine is bound at residue T235–E237. ATP contacts are provided by residues R266–E268 and V282. E289 contacts L-serine. E355–S358 contributes to the ATP binding site. T393 is a binding site for L-serine.

It belongs to the class-II aminoacyl-tRNA synthetase family. Type-1 seryl-tRNA synthetase subfamily. As to quaternary structure, homodimer. The tRNA molecule binds across the dimer.

The enzyme catalyses tRNA(Ser) + L-serine + ATP = L-seryl-tRNA(Ser) + AMP + diphosphate + H(+). It catalyses the reaction tRNA(Sec) + L-serine + ATP = L-seryl-tRNA(Sec) + AMP + diphosphate + H(+). It participates in aminoacyl-tRNA biosynthesis; selenocysteinyl-tRNA(Sec) biosynthesis; L-seryl-tRNA(Sec) from L-serine and tRNA(Sec): step 1/1. In terms of biological role, catalyzes the attachment of serine to tRNA(Ser). Is also able to aminoacylate tRNA(Sec) with serine, to form the misacylated tRNA L-seryl-tRNA(Sec), which will be further converted into selenocysteinyl-tRNA(Sec). In Helianthus annuus (Common sunflower), this protein is Serine--tRNA ligase.